Consider the following 349-residue polypeptide: 11-beta-hydroxysteroid dehydrogenase 1A (349 aa).

A helical; Signal-anchor for type II membrane protein transmembrane segment spans residues leucine 10–phenylalanine 30. NADP(+) contacts are provided by residues glycine 54 to arginine 80 and aspartate 105. Position 184 (serine 184) interacts with substrate. The active-site Proton acceptor is the tyrosine 197. NADP(+) is bound by residues tyrosine 197 to lysine 201 and lysine 201.

Belongs to the short-chain dehydrogenases/reductases (SDR) family. Expressed in the above-ground part of seedlings, especially in the vascular tissues. Also detected in the buds and silique pedicels. Highly induced in oil-accumulating tissues of maturing seeds.

Its subcellular location is the lipid droplet. The protein resides in the membrane. It catalyses the reaction an 11beta-hydroxysteroid + NADP(+) = an 11-oxosteroid + NADPH + H(+). The catalysed reaction is 17beta-estradiol + NADP(+) = estrone + NADPH + H(+). The enzyme catalyses corticosterone + NADP(+) = 11-dehydrocorticosterone + NADPH + H(+). It carries out the reaction cortisone + NADPH + H(+) = cortisol + NADP(+). Functionally, catalyzes 11-beta, 17-beta-hydroxysteroid and reduces 17-beta-ketosteroids. Involved in regulating plant growth and development, probably promoting or mediating brassinosteroid effects. Plays a role during seed maturation. The protein is 11-beta-hydroxysteroid dehydrogenase 1A (HSD1) of Arabidopsis thaliana (Mouse-ear cress).